The sequence spans 60 residues: uncharacterized protein (60 aa).

This is an uncharacterized protein from Emericella nidulans (strain FGSC A4 / ATCC 38163 / CBS 112.46 / NRRL 194 / M139) (Aspergillus nidulans).